Reading from the N-terminus, the 333-residue chain is MGKNITVLGAGAWGTAFGQVLADAGNTVTMWAKEQQIVEGIRDHHHNAVRLPSVEKLPDNMTATGDRAEAVKNADIVVVAIAAQFARVALVEFKGLIPDHAIVVSLMKGIERGTNKRMDEVVRESLDLPADRFAAISGPNLSKEIADRHPAATVVACTNLDNATKVAEACTTSYFKPFVTTDVIGLEMCGSLKNVTALAVGMARGAGYGENTAAMIETRGLAELTALGVAAGADPKTFFGLAGVGDLIATCGSSLSRNYTFGANLGKGLTVEEATKVSNGVAEGVPTTDAVVALGDQLDVPTPLAYQMSRVLNEGISCSEMLAGLFGHEVTGE.

Positions 13, 33, and 108 each coordinate NADPH. Sn-glycerol 3-phosphate contacts are provided by K108 and G138. Residue S142 coordinates NADPH. Sn-glycerol 3-phosphate is bound by residues K193, D246, S256, R257, and N258. Catalysis depends on K193, which acts as the Proton acceptor. R257 provides a ligand contact to NADPH. 2 residues coordinate NADPH: V281 and E283.

The protein belongs to the NAD-dependent glycerol-3-phosphate dehydrogenase family.

Its subcellular location is the cytoplasm. The enzyme catalyses sn-glycerol 3-phosphate + NAD(+) = dihydroxyacetone phosphate + NADH + H(+). It carries out the reaction sn-glycerol 3-phosphate + NADP(+) = dihydroxyacetone phosphate + NADPH + H(+). It functions in the pathway membrane lipid metabolism; glycerophospholipid metabolism. In terms of biological role, catalyzes the reduction of the glycolytic intermediate dihydroxyacetone phosphate (DHAP) to sn-glycerol 3-phosphate (G3P), the key precursor for phospholipid synthesis. In Bifidobacterium longum (strain NCC 2705), this protein is Glycerol-3-phosphate dehydrogenase [NAD(P)+].